A 366-amino-acid polypeptide reads, in one-letter code: Ribosomal RNA large subunit methyltransferase M (366 aa).

Residues Ser188, 221-224 (CPGG), Asp240, Asp260, and Asp277 each bind S-adenosyl-L-methionine. Catalysis depends on Lys306, which acts as the Proton acceptor.

Belongs to the class I-like SAM-binding methyltransferase superfamily. RNA methyltransferase RlmE family. RlmM subfamily. In terms of assembly, monomer.

Its subcellular location is the cytoplasm. It catalyses the reaction cytidine(2498) in 23S rRNA + S-adenosyl-L-methionine = 2'-O-methylcytidine(2498) in 23S rRNA + S-adenosyl-L-homocysteine + H(+). Functionally, catalyzes the 2'-O-methylation at nucleotide C2498 in 23S rRNA. The chain is Ribosomal RNA large subunit methyltransferase M from Pectobacterium atrosepticum (strain SCRI 1043 / ATCC BAA-672) (Erwinia carotovora subsp. atroseptica).